A 29-amino-acid polypeptide reads, in one-letter code: Trypsin inhibitor 3 (29 aa).

Disulfide bonds link Cys-3–Cys-20, Cys-10–Cys-22, and Cys-16–Cys-28.

This sequence belongs to the protease inhibitor I7 (squash-type serine protease inhibitor) family.

It localises to the secreted. Functionally, strongly inhibits trypsin, weakly inhibits chymotrypsin. This Cyclanthera pedata (Achocha) protein is Trypsin inhibitor 3.